Reading from the N-terminus, the 329-residue chain is GMP reductase (329 aa).

Residue cysteine 178 is the Thioimidate intermediate of the active site. 207-230 is a binding site for NADP(+); it reads IIADGGIRNNGDIAKSIRFGATMC.

The protein belongs to the IMPDH/GMPR family. GuaC type 2 subfamily.

It catalyses the reaction IMP + NH4(+) + NADP(+) = GMP + NADPH + 2 H(+). In terms of biological role, catalyzes the irreversible NADPH-dependent deamination of GMP to IMP. It functions in the conversion of nucleobase, nucleoside and nucleotide derivatives of G to A nucleotides, and in maintaining the intracellular balance of A and G nucleotides. This is GMP reductase from Lacticaseibacillus casei (strain BL23) (Lactobacillus casei).